Here is a 197-residue protein sequence, read N- to C-terminus: EF-hand calcium-binding domain-containing protein 9 (197 aa).

Ca(2+)-binding residues include D58 and D69. 3 consecutive EF-hand domains span residues 59-94 (LKKAQINIVFDMLDWNAVGEIDFEKFYMLVCMLLAH), 100-135 (GQFMYRHSRPVFDLLDLKGDLRIGAKNFEMYRFLFN), and 136-171 (IQKQELKDLFRDFDITGDNRLNYQEFKLYTIIYTDK). Ca(2+)-binding residues include D149, D153, R155, and E160. The segment covering 177–188 (KTEEKEKGERKR) has biased composition (basic and acidic residues). Residues 177-197 (KTEEKEKGERKRSLYSKCHIK) form a disordered region.

As to quaternary structure, component of the CatSper complex or CatSpermasome composed of the core pore-forming members CATSPER1, CATSPER2, CATSPER3 and CATSPER4 as well as auxiliary members CATSPERB, CATSPERG, CATSPERD, CATSPERE, CATSPERZ, C2CD6/CATSPERT, TMEM249, TMEM262 and EFCAB9. HSPA1 may be an additional auxiliary complex member. The core complex members CATSPER1, CATSPER2, CATSPER3 and CATSPER4 form a heterotetrameric channel. The auxiliary CATSPERB, CATSPERG, CATSPERD and CATSPERE subunits form a pavilion-like structure over the pore which stabilizes the complex through interactions with CATSPER4, CATSPER3, CATSPER1 and CATSPER2 respectively. TMEM262/CATSPERH interacts with CATSPERB, further stabilizing the complex. C2CD6/CATSPERT interacts at least with CATSPERD and is required for targeting the CatSper complex in the flagellar membrane. Interacts with CATSPERZ; the interaction is direct, Ca(2+)-dependent and connects EFCAB9 with the CatSper complex. Dissociates from CATSPERZ at elevated pH.

It is found in the cytoplasm. The protein resides in the cell projection. Its subcellular location is the cilium. The protein localises to the flagellum. In terms of biological role, auxiliary component of the CatSper complex, a complex involved in sperm cell hyperactivation. pH-dependent Ca(2+) sensor required to activate the CatSper channel. Sperm cell hyperactivation is needed for sperm motility which is essential late in the preparation of sperm for fertilization. Associates with the CatSper complex via direct interaction with CATSPERZ, and senses intracellular Ca(2+). Together with CATSPERZ, associates with the CatSper channel pore and is required for the two-row structure of each single CatSper channel. The chain is EF-hand calcium-binding domain-containing protein 9 from Homo sapiens (Human).